A 183-amino-acid chain; its full sequence is Peptide deformylase (183 aa).

2 residues coordinate Fe cation: Cys90 and His132. Glu133 is an active-site residue. His136 contributes to the Fe cation binding site.

This sequence belongs to the polypeptide deformylase family. Fe(2+) is required as a cofactor.

It carries out the reaction N-terminal N-formyl-L-methionyl-[peptide] + H2O = N-terminal L-methionyl-[peptide] + formate. Removes the formyl group from the N-terminal Met of newly synthesized proteins. Requires at least a dipeptide for an efficient rate of reaction. N-terminal L-methionine is a prerequisite for activity but the enzyme has broad specificity at other positions. This chain is Peptide deformylase, found in Parafrankia sp. (strain EAN1pec).